Reading from the N-terminus, the 435-residue chain is Serine--tRNA ligase (435 aa).

Residue 242–244 (TAE) coordinates L-serine. Residue 273 to 275 (RSE) participates in ATP binding. E296 serves as a coordination point for L-serine. An ATP-binding site is contributed by 360 to 363 (EISS). An L-serine-binding site is contributed by S396.

It belongs to the class-II aminoacyl-tRNA synthetase family. Type-1 seryl-tRNA synthetase subfamily. As to quaternary structure, homodimer. The tRNA molecule binds across the dimer.

Its subcellular location is the cytoplasm. The catalysed reaction is tRNA(Ser) + L-serine + ATP = L-seryl-tRNA(Ser) + AMP + diphosphate + H(+). The enzyme catalyses tRNA(Sec) + L-serine + ATP = L-seryl-tRNA(Sec) + AMP + diphosphate + H(+). It participates in aminoacyl-tRNA biosynthesis; selenocysteinyl-tRNA(Sec) biosynthesis; L-seryl-tRNA(Sec) from L-serine and tRNA(Sec): step 1/1. Functionally, catalyzes the attachment of serine to tRNA(Ser). Is also able to aminoacylate tRNA(Sec) with serine, to form the misacylated tRNA L-seryl-tRNA(Sec), which will be further converted into selenocysteinyl-tRNA(Sec). The polypeptide is Serine--tRNA ligase (Aliivibrio salmonicida (strain LFI1238) (Vibrio salmonicida (strain LFI1238))).